The sequence spans 400 residues: Lysophospholipid transporter LplT (400 aa).

12 helical membrane-spanning segments follow: residues 19–39 (VIVA…ATLA), 53–73 (VLQM…GQIA), 91–111 (AGAA…LVGI), 139–159 (MMEA…GVLA), 164–184 (IAAL…NLFI), 195–213 (SWRL…VVLW), 227–247 (LFWG…PVAL), 257–277 (YLNA…AKLV), 281–301 (TVSR…IFSL), 304–324 (ALLP…FFVV), 352–372 (NSAM…GVPA), and 373–393 (VAIG…LWIW).

The protein belongs to the major facilitator superfamily. LplT (TC 2.A.1.42) family.

It is found in the cell inner membrane. Catalyzes the facilitated diffusion of 2-acyl-glycero-3-phosphoethanolamine (2-acyl-GPE) into the cell. The sequence is that of Lysophospholipid transporter LplT from Salmonella paratyphi B (strain ATCC BAA-1250 / SPB7).